A 1099-amino-acid chain; its full sequence is SLIT-ROBO Rho GTPase-activating protein 3 (1099 aa).

An F-BAR domain is found at 19 to 314 (AQIKEIRTQL…AVDNLDSRSD (296 aa)). Residues 352-392 (QTELLMRYHQLQSRLATLKIENEEVRKTLDATMQTLQDMLT) are a coiled coil. The disordered stretch occupies residues 470–493 (GERAECGTTRPPCLPPKPQKMRRP). The Rho-GAP domain occupies 506-694 (GSMEAFIKDS…TIIIHHEAIF (189 aa)). In terms of domain architecture, SH3 spans 744–803 (VEQIEAIAKFDYVGRSPRELSFKKGASLLLYHRASEDWWEGRHNGVDGLIPHQYIVVQDM). A compositionally biased stretch (polar residues) spans 809-820 (DSLSQKADSEAS). Positions 809 to 846 (DSLSQKADSEASSGPLLDDKASSKNDLQSPTEHISDYG) are disordered. Serine 817, serine 820, serine 821, serine 837, and serine 858 each carry phosphoserine. The disordered stretch occupies residues 861–911 (AAIPRRRSGGDTHSPPRGLGPSIDTPPRAAACPSSPHKIPLSRGRIESPEK). A coiled-coil region spans residues 952-987 (HKSLEAEALAEDIEKTMSTALHELRELERQNTVKQA). Serine 954 bears the Phosphoserine mark. 2 disordered regions span residues 994 to 1014 (TLEPLKNPPGPISSEPASPLH) and 1045 to 1099 (ARLA…SGTM). Positions 1060-1074 (VRPVVQHRSSSSSSS) are enriched in low complexity. Polar residues predominate over residues 1089–1099 (PNSSSDKSGTM).

Homodimer. Forms a heterooligomer with SRGAP1 and SRGAP2 through its F-BAR domain. Interacts with WASF1. Probably interacts with ROBO1. Interacts with FASLG.

In terms of biological role, GTPase-activating protein for RAC1 and perhaps CDC42, but not for RhoA small GTPase. May attenuate RAC1 signaling in neurons. The protein is SLIT-ROBO Rho GTPase-activating protein 3 (Srgap3) of Mus musculus (Mouse).